We begin with the raw amino-acid sequence, 487 residues long: Alpha-1,4-L-rhamnosidase (487 aa).

Positions 1-30 (MKNKKRLCHILKYIITCFLFGVIFIIPIQA) are cleaved as a signal peptide. Catalysis depends on Glu199, which acts as the Proton donor.

The protein belongs to the glycosyl hydrolase 39 family.

It is found in the periplasm. In terms of biological role, alpha-rhamnosidase involved in ulvan degradation. Ulvan is the main polysaccharide component of the Ulvales (green seaweed) cell wall. It is composed of disaccharide building blocks comprising 3-sulfated rhamnose (Rha3S) linked to D-glucuronic acid (GlcA), L-iduronic acid (IduA), or D-xylose (Xyl). Endo-acting alpha-1,4-L-rhamnosidase cleaves rhamnose sections interspersed between xylose residues within the polymer, degrading larger oligomers with consecutive Xyl-Rha3S units that are resistant to the ulvan lyases and producing dimers Xyl-Rha3S and Xyl2S-Rha3S as the smallest products. The chain is Alpha-1,4-L-rhamnosidase from Formosa agariphila (strain DSM 15362 / KCTC 12365 / LMG 23005 / KMM 3901 / M-2Alg 35-1).